A 337-amino-acid chain; its full sequence is Phosphate acyltransferase (337 aa).

The protein belongs to the PlsX family. In terms of assembly, homodimer. Probably interacts with PlsY.

It is found in the cytoplasm. It catalyses the reaction a fatty acyl-[ACP] + phosphate = an acyl phosphate + holo-[ACP]. The protein operates within lipid metabolism; phospholipid metabolism. In terms of biological role, catalyzes the reversible formation of acyl-phosphate (acyl-PO(4)) from acyl-[acyl-carrier-protein] (acyl-ACP). This enzyme utilizes acyl-ACP as fatty acyl donor, but not acyl-CoA. The chain is Phosphate acyltransferase from Halalkalibacterium halodurans (strain ATCC BAA-125 / DSM 18197 / FERM 7344 / JCM 9153 / C-125) (Bacillus halodurans).